A 235-amino-acid polypeptide reads, in one-letter code: Thiamine import ATP-binding protein ThiQ (235 aa).

One can recognise an ABC transporter domain in the interval 2–230; it reads LKLIDITWLY…QASASALLGI (229 aa). Residue 32-39 coordinates ATP; sequence GPSGAGKS.

The protein belongs to the ABC transporter superfamily. Thiamine importer (TC 3.A.1.19.1) family. In terms of assembly, the complex is composed of two ATP-binding proteins (ThiQ), two transmembrane proteins (ThiP) and a solute-binding protein (ThiB).

The protein localises to the cell inner membrane. It carries out the reaction thiamine(out) + ATP + H2O = thiamine(in) + ADP + phosphate + H(+). In terms of biological role, part of the ABC transporter complex ThiBPQ involved in thiamine import. Responsible for energy coupling to the transport system. Is also involved in thiamine pyrophosphate (TPP) transport. The protein is Thiamine import ATP-binding protein ThiQ of Salmonella typhimurium (strain LT2 / SGSC1412 / ATCC 700720).